Consider the following 966-residue polypeptide: Regulator of G-protein signaling 3 (966 aa).

The 78-residue stretch at Gln18 to Val95 folds into the PDZ domain. Residues Thr115–Val135 are disordered. Arg167 is subject to Omega-N-methylarginine. Disordered regions lie at residues Glu403 to Val618 and Tyr637 to Asn704. Polar residues-rich tracts occupy residues Pro527–Pro548 and Ser576–Gly594. Over residues Gly649–Asn675 the composition is skewed to acidic residues. A compositionally biased stretch (basic and acidic residues) spans Tyr676 to Ser686. A phosphoserine mark is found at Ser712, Ser715, Ser747, and Ser776. The interval Phe806–Pro830 is disordered. Over residues Lys820–Pro830 the composition is skewed to basic and acidic residues. The 126-residue stretch at Ser841–Leu966 folds into the RGS domain.

As to quaternary structure, binds the GNB1-GNG2 heterodimer. Binds EFNB1 and EFNB2. Post-translationally, phosphorylated by cyclic GMP-dependent protein kinase. In terms of processing, ISGylated. In terms of tissue distribution, detected in embryos from E8.5-16.5 in cortical ventricular zone, dorsal root ganglia and cerebellar primordia. Isoform 3 is detected in testis and in spermatocytes from newborn mice. Levels increase and reach a maximum after 21 days; after this they decrease again. Long isoforms are widely expressed.

The protein localises to the cytoplasm. The protein resides in the cell membrane. It localises to the nucleus. Its function is as follows. Down-regulates signaling from heterotrimeric G-proteins by increasing the GTPase activity of the alpha subunits, thereby driving them into their inactive GDP-bound form. Down-regulates G-protein-mediated release of inositol phosphates and activation of MAP kinases. This chain is Regulator of G-protein signaling 3 (Rgs3), found in Mus musculus (Mouse).